The following is a 342-amino-acid chain: MSKASALLAGLTGAALVAAHGHVSHIVVNGVYYRNYDPTTDWYQPNPPTVIGWTAADQDNGFVEPNSFGTPDIICHKSATPGGGHATVAAGDKINIVWTPEWPESHIGPVIDYLAACNGDCETVDKSSLRWFKIDGAGYDKAAGRWAADALRANGNSWLVQIPSDLKAGNYVLRHEIIALHGAQSPNGAQAYPQCINLRVTGGGSNLPSGVAGTSLYKATDPGILFNPYVSSPDYTVPGPALIAGAASSIAQSTSVATATGTATVPGGGGANPTATTTAATSAAPSTTLRTTTTSAAQTTAPPSGDVQTKYGQCGGNGWTGPTVCAPGSSCSVLNEWYSQCL.

Positions 1-19 are cleaved as a signal peptide; sequence MSKASALLAGLTGAALVAA. Cu(2+) is bound by residues histidine 20 and histidine 106. Cystine bridges form between cysteine 75-cysteine 195 and cysteine 117-cysteine 121. The O2 site is built by histidine 181 and glutamine 190. Tyrosine 192 is a Cu(2+) binding site. The segment at 263-308 is disordered; the sequence is ATVPGGGGANPTATTTAATSAAPSTTLRTTTTSAAQTTAPPSGDVQ. A compositionally biased stretch (low complexity) spans 272-305; it reads NPTATTTAATSAAPSTTLRTTTTSAAQTTAPPSG. The CBM1 domain occupies 306 to 342; sequence DVQTKYGQCGGNGWTGPTVCAPGSSCSVLNEWYSQCL.

This sequence belongs to the polysaccharide monooxygenase AA9 family. The cofactor is Cu(2+).

The protein localises to the secreted. It catalyses the reaction [(1-&gt;4)-beta-D-glucosyl]n+m + reduced acceptor + O2 = 4-dehydro-beta-D-glucosyl-[(1-&gt;4)-beta-D-glucosyl]n-1 + [(1-&gt;4)-beta-D-glucosyl]m + acceptor + H2O.. Its activity is regulated as follows. The presence of lignin presents a significant source of antioxidants, which probably increase the activity by trapping liberated oxidized fragments. Functionally, lytic polysaccharide monooxygenase (LPMO) that depolymerizes crystalline and amorphous polysaccharides via the oxidation of scissile alpha- or beta-(1-4)-glycosidic bonds, yielding C1 or C4 oxidation products. Catalysis by LPMOs requires the reduction of the active-site copper from Cu(II) to Cu(I) by a reducing agent and H(2)O(2) or O(2) as a cosubstrate. Hydrolyzes weakly barley beta-glucan, carboxymethyl cellulose, lichenan, wheat arabinoxylan and birchwood xylan. Stimulates the hydrolysis of lignocellulosic substrates (such as hydrothermal pretreated wheat straw or steam-pretreated spruce), when combined with other cellulolytic enzymes. This chain is AA9 family lytic polysaccharide monooxygenase H, found in Thermothelomyces thermophilus (strain ATCC 42464 / BCRC 31852 / DSM 1799) (Sporotrichum thermophile).